The primary structure comprises 372 residues: Probable E3 ubiquitin-protein ligase makorin-1 (372 aa).

2 C3H1-type zinc fingers span residues 20-45 (KHVT…HDLT) and 48-75 (KPAA…HCKP). A disordered region spans residues 78–110 (NEEFSSPQMLPPSSPSPSTDPESSQPAPRPKTQ). Positions 93–103 (SPSTDPESSQP) are enriched in low complexity. The segment at 153–180 (ALRKQLCPYAAVGECRYGINCAYLHGDV) adopts a C3H1-type 3 zinc-finger fold. Positions 181 to 208 (CDMCGLQVLHPTDNSQRSQHTKACIEAH) are makorin-type Cys-His. The RING-type zinc finger occupies 226–280 (CGVCMEVVFEKANPSERRFGILSNCNHCYCLKCIRKWRSAKQFESKIIKSCPECR). Residues 309 to 338 (GMGRKPCRYFDEGRGICPFGANCFYKHAFP) form a C3H1-type 4 zinc finger.

The enzyme catalyses S-ubiquitinyl-[E2 ubiquitin-conjugating enzyme]-L-cysteine + [acceptor protein]-L-lysine = [E2 ubiquitin-conjugating enzyme]-L-cysteine + N(6)-ubiquitinyl-[acceptor protein]-L-lysine.. The protein operates within protein modification; protein ubiquitination. Functionally, E3 ubiquitin ligase catalyzing the covalent attachment of ubiquitin moieties onto substrate proteins. The polypeptide is Probable E3 ubiquitin-protein ligase makorin-1 (Tetraodon nigroviridis (Spotted green pufferfish)).